The following is a 491-amino-acid chain: Ribonuclease Y (491 aa).

Residues 4 to 24 form a helical membrane-spanning segment; it reads LIATVGVVAVAALVIAIFVVI. In terms of domain architecture, KH spans 181-247; that stretch reads VVSVVHLPGD…RVALERLVDD (67 aa). Residues 307–400 form the HD domain; sequence VLKHLVETAH…TQAADAISGG (94 aa).

The protein belongs to the RNase Y family.

The protein resides in the cell membrane. In terms of biological role, endoribonuclease that initiates mRNA decay. The protein is Ribonuclease Y of Acidothermus cellulolyticus (strain ATCC 43068 / DSM 8971 / 11B).